We begin with the raw amino-acid sequence, 337 residues long: Ribosomal RNA small subunit methyltransferase C (337 aa).

Belongs to the methyltransferase superfamily. RsmC family. Monomer.

It localises to the cytoplasm. It carries out the reaction guanosine(1207) in 16S rRNA + S-adenosyl-L-methionine = N(2)-methylguanosine(1207) in 16S rRNA + S-adenosyl-L-homocysteine + H(+). In terms of biological role, specifically methylates the guanine in position 1207 of 16S rRNA in the 30S particle. The chain is Ribosomal RNA small subunit methyltransferase C from Acinetobacter baumannii (strain AB307-0294).